The primary structure comprises 206 residues: Large ribosomal subunit protein uL4 (206 aa).

This sequence belongs to the universal ribosomal protein uL4 family. In terms of assembly, part of the 50S ribosomal subunit.

One of the primary rRNA binding proteins, this protein initially binds near the 5'-end of the 23S rRNA. It is important during the early stages of 50S assembly. It makes multiple contacts with different domains of the 23S rRNA in the assembled 50S subunit and ribosome. Its function is as follows. Forms part of the polypeptide exit tunnel. The chain is Large ribosomal subunit protein uL4 from Rhodopseudomonas palustris (strain HaA2).